A 649-amino-acid chain; its full sequence is MISPAWSLFLIGTKIGLFFQVAPLSVMAKSCPSVCRCDAGFIYCNDRSLTSIPVGIPEDATTLYLQNNQINNVGIPSDLKNLLKVQRIYLYHNSLDEFPTNLPKYVKELHLQENNIRTITYDSLSKIPYLEELHLDDNSVSAVSIEEGAFRDSNYLRLLFLSRNHLSTIPGGLPRTIEELRLDDNRISTISSPSLHGLTSLKRLVLDGNLLNNHGLGDKVFFNLVNLTELSLVRNSLTAAPVNLPGTSLRKLYLQDNHINRVPPNAFSYLRQLYRLDMSNNNLSNLPQGIFDDLDNITQLILRNNPWYCGCKMKWVRDWLQSLPVKVNVRGLMCQAPEKVRGMAIKDLSAELFDCKDSGIVSTVQITTAIPNTAYPAQGQWPAPVTKQPDIKNPKLTKDQRTTGSPSRKTILITVKSVTPDTIHISWRLALPMTALRLSWLKLGHSPAFGSITETIVTGERSEYLVTALEPESPYRVCMVPMETSNLYLFDETPVCIETQTAPLRMYNPTTTLNREQEKEPYKNPNLPLAAIIGGAVALVSIALLALVCWYVHRNGSLFSRNCAYSKGRRRKDDYAEAGTKKDNSILEIRETSFQMLPISNEPISKEEFVIHTIFPPNGMNLYKNNLSESSSNRSYRDSGIPDLDHSHS.

The signal sequence occupies residues 1–28 (MISPAWSLFLIGTKIGLFFQVAPLSVMA). Positions 29–58 (KSCPSVCRCDAGFIYCNDRSLTSIPVGIPE) constitute an LRRNT domain. Residues 29-528 (KSCPSVCRCD…KEPYKNPNLP (500 aa)) are Extracellular-facing. 2 cysteine pairs are disulfide-bonded: Cys-31-Cys-37 and Cys-35-Cys-44. Residues 38–67 (DAGFIYCNDRSLTSIPVGIPEDATTLYLQN) are interaction with ADGRL3. LRR repeat units lie at residues 59-80 (DATT…SDLK), 84-104 (KVQR…NLPK), 105-126 (YVKE…SLSK), 129-150 (YLEE…EGAF), 155-176 (YLRL…LPRT), 177-197 (IEEL…SLHG), 200-220 (SLKR…GDKV), 226-247 (NLTE…LPGT), 248-269 (SLRK…AFSY), and 272-293 (QLYR…IFDD). Asn-226 carries N-linked (GlcNAc...) asparagine glycosylation. N-linked (GlcNAc...) asparagine glycans are attached at residues Asn-282 and Asn-296. The LRRCT domain maps to 305-357 (NPWYCGCKMKWVRDWLQSLPVKVNVRGLMCQAPEKVRGMAIKDLSAELFDCKD). Cysteines 309 and 334 form a disulfide. The disordered stretch occupies residues 378-405 (QGQWPAPVTKQPDIKNPKLTKDQRTTGS). A compositionally biased stretch (basic and acidic residues) spans 389-401 (PDIKNPKLTKDQR). The Fibronectin type-III domain occupies 405–504 (SPSRKTILIT…VCIETQTAPL (100 aa)). Residues 529-549 (LAAIIGGAVALVSIALLALVC) form a helical membrane-spanning segment. The Cytoplasmic portion of the chain corresponds to 550 to 649 (WYVHRNGSLF…GIPDLDHSHS (100 aa)). Positions 629–649 (ESSSNRSYRDSGIPDLDHSHS) are disordered.

As to quaternary structure, monomer and homodimer. Self-associates (via leucine-rich repeats), giving rise to homooligomers. Interacts with FGFR1. Interacts (via extracellular domain) with ADGRL1/LPHN1 and ADGRL3 (via olfactomedin-like domain). Interacts (via extracellular domain) with LPHN2 (via olfactomedin-like domain). Interacts (via extracellular domain) with UNC5B (via Ig domain). May also interact (via extracellular domain) with UNC5A and UNC5C. Interacts (via extracellular domain) with UNC5D (via extracellular domain). Identified in complexes composed of FLRT3, ADGRL3 and UNC5B, respectively FLRT3, ADGRL3 and UNC5D. Interacts (via cytoplasmic domain) with ROBO1. N-glycosylated. Post-translationally, proteolytic cleavage in the juxtamembrane region gives rise to a soluble ectodomain. Cleavage is probably effected by a metalloprotease. Detected in brain (at protein level). Detected in brain neurons, especially in basal ganglia, hippocampus dentate gyrus and CA3 region, cerebellum and in olfactory bulb.

Its subcellular location is the cell membrane. The protein resides in the presynaptic cell membrane. It localises to the synapse. It is found in the synaptosome. The protein localises to the postsynaptic density. Its subcellular location is the cell projection. The protein resides in the dendrite. It localises to the axon. It is found in the growth cone membrane. The protein localises to the cytoplasmic vesicle. Its subcellular location is the endoplasmic reticulum membrane. The protein resides in the cell junction. It localises to the focal adhesion. It is found in the secreted. Its function is as follows. Functions in cell-cell adhesion, cell migration and axon guidance, exerting an attractive or repulsive role depending on its interaction partners. Plays a role in the spatial organization of brain neurons. Plays a role in vascular development in the retina. Plays a role in cell-cell adhesion via its interaction with ADGRL3 and probably also other latrophilins that are expressed at the surface of adjacent cells. Interaction with the intracellular domain of ROBO1 mediates axon attraction towards cells expressing NTN1. Mediates axon growth cone collapse and plays a repulsive role in neuron guidance via its interaction with UNC5B, and possibly also other UNC-5 family members. Promotes neurite outgrowth (in vitro). Mediates cell-cell contacts that promote an increase both in neurite number and in neurite length. Plays a role in the regulation of the density of glutamaergic synapses. Plays a role in fibroblast growth factor-mediated signaling cascades. Required for normal morphogenesis during embryonic development, but not for normal embryonic patterning. Required for normal ventral closure, headfold fusion and definitive endoderm migration during embryonic development. Required for the formation of a normal basement membrane and the maintenance of a normal anterior visceral endoderm during embryonic development. This is Leucine-rich repeat transmembrane protein FLRT3 (Flrt3) from Rattus norvegicus (Rat).